We begin with the raw amino-acid sequence, 67 residues long: Photosystem II reaction center protein H (67 aa).

Residues 27–47 (GAVPVMAFVGVLLLVFLVILL) form a helical membrane-spanning segment.

The protein belongs to the PsbH family. As to quaternary structure, PSII is composed of 1 copy each of membrane proteins PsbA, PsbB, PsbC, PsbD, PsbE, PsbF, PsbH, PsbI, PsbJ, PsbK, PsbL, PsbM, PsbT, PsbX, PsbY, Psb30/Ycf12, peripheral proteins PsbO, CyanoQ (PsbQ), PsbU, PsbV and a large number of cofactors. It forms dimeric complexes.

The protein localises to the cellular thylakoid membrane. Functionally, one of the components of the core complex of photosystem II (PSII), required for its stability and/or assembly. PSII is a light-driven water:plastoquinone oxidoreductase that uses light energy to abstract electrons from H(2)O, generating O(2) and a proton gradient subsequently used for ATP formation. It consists of a core antenna complex that captures photons, and an electron transfer chain that converts photonic excitation into a charge separation. In Prochlorococcus marinus (strain SARG / CCMP1375 / SS120), this protein is Photosystem II reaction center protein H.